Consider the following 206-residue polypeptide: MKILHIDSGILGEHSVSRRLTSAIVSQLKADRPDAEITYRDLASERVPHLTGAQIMAPADLEGVDALLAADVRIGRQMLEEFLAADTVVVGAPMYNFSIPSQLKAWIDRLAVAGKTFRYTEAGPEGLAKGKKLIVASTRGGHYSVAPASAMDHQETYLRSVFGFFGITDIEFIRAEGLNLGPDQKQFAIAEAEKTIAEGNVLKLAS.

Residues 15–17, 94–97, and 138–141 contribute to the FMN site; these read SVS, MYNF, and TRGG.

The protein belongs to the azoreductase type 1 family. Homodimer. The cofactor is FMN.

The catalysed reaction is 2 a quinone + NADH + H(+) = 2 a 1,4-benzosemiquinone + NAD(+). The enzyme catalyses N,N-dimethyl-1,4-phenylenediamine + anthranilate + 2 NAD(+) = 2-(4-dimethylaminophenyl)diazenylbenzoate + 2 NADH + 2 H(+). Functionally, quinone reductase that provides resistance to thiol-specific stress caused by electrophilic quinones. Its function is as follows. Also exhibits azoreductase activity. Catalyzes the reductive cleavage of the azo bond in aromatic azo compounds to the corresponding amines. The protein is FMN-dependent NADH:quinone oxidoreductase of Rhizobium meliloti (strain 1021) (Ensifer meliloti).